We begin with the raw amino-acid sequence, 373 residues long: MLRSVWNFLKRHKKKCIFLGTVLGGVYILGKYGQKKIREIQEREAAEYIAQARRQYHFESNQRTCNMTVLSMLPTLREALMQQLNSESLTALLKNRPSNKLEIWEDLKIISFTRSTVAVYSTCMLVVLLRVQLNIIGGYIYLDNAAVGKNGTTILAPPDVQQQYLSSIQHLLGDGLTELITVIKQAVQKVLGSVSLKHSLSLLDLEQKLKEIRNLVEQHKSSSWINKDGSKPLLCHYMMPDEETPLAVQACGLSPRDITTIKLLNETRDMLESPDFSTVLNTCLNRGFSRLLDNMAEFFRPTEQDLQHGNSMNSLSSVSLPLAKIIPIVNGQIHSVCSETPSHFVQDLLTMEQVKDFAANVYEAFSTPQQLEK.

At 1–15 (MLRSVWNFLKRHKKK) the chain is on the cytoplasmic side. The tract at residues 1–45 (MLRSVWNFLKRHKKKCIFLGTVLGGVYILGKYGQKKIREIQEREA) is targeting to peroxisomes. A helical membrane pass occupies residues 16 to 36 (CIFLGTVLGGVYILGKYGQKK). The Peroxisomal portion of the chain corresponds to 37-116 (IREIQEREAA…LKIISFTRST (80 aa)). Residues 117–140 (VAVYSTCMLVVLLRVQLNIIGGYI) traverse the membrane as a helical segment. The interaction with PEX19 stretch occupies residues 120–136 (YSTCMLVVLLRVQLNII). The Cytoplasmic portion of the chain corresponds to 141 to 373 (YLDNAAVGKN…AFSTPQQLEK (233 aa)).

It belongs to the peroxin-3 family. In terms of assembly, interacts with PEX19. Found in all examined tissues.

The protein localises to the peroxisome membrane. Its function is as follows. Involved in peroxisome biosynthesis and integrity. Assembles membrane vesicles before the matrix proteins are translocated. As a docking factor for PEX19, is necessary for the import of peroxisomal membrane proteins in the peroxisomes. The chain is Peroxisomal biogenesis factor 3 (PEX3) from Homo sapiens (Human).